The sequence spans 335 residues: DNA-directed RNA polymerase subunit alpha (335 aa).

The tract at residues 1 to 233 (MMLNATEFLT…QQISIFVDLE (233 aa)) is alpha N-terminal domain (alpha-NTD). The interval 247–335 (VDPVLLRPVD…VDDRFSYRSR (89 aa)) is alpha C-terminal domain (alpha-CTD).

This sequence belongs to the RNA polymerase alpha chain family. Homodimer. The RNAP catalytic core consists of 2 alpha, 1 beta, 1 beta' and 1 omega subunit. When a sigma factor is associated with the core the holoenzyme is formed, which can initiate transcription.

The enzyme catalyses RNA(n) + a ribonucleoside 5'-triphosphate = RNA(n+1) + diphosphate. Its function is as follows. DNA-dependent RNA polymerase catalyzes the transcription of DNA into RNA using the four ribonucleoside triphosphates as substrates. The polypeptide is DNA-directed RNA polymerase subunit alpha (Psychrobacter arcticus (strain DSM 17307 / VKM B-2377 / 273-4)).